Here is a 280-residue protein sequence, read N- to C-terminus: Serine protease 33 (280 aa).

A signal peptide spans 1-22 (MRGVSCLQVLLLLVLGAAGTQG). The 243-residue stretch at 37–279 (IVGGRDGRDG…YSPWIQARVS (243 aa)) folds into the Peptidase S1 domain. A disulfide bridge links Cys62 with Cys78. Residues His77 and Asp126 each act as charge relay system in the active site. 3 disulfide bridges follow: Cys160/Cys237, Cys193/Cys216, and Cys227/Cys255. Ser231 acts as the Charge relay system in catalysis.

It belongs to the peptidase S1 family. Predominantly expressed in macrophages. Present in the spleen, small and large intestine, lung and brain (at protein level). Highly expressed in peripheral leukocytes, ovary, retina, spleen and stomach. Moderately expressed in thymus, uterus and platelets, as well as some brain tissues, such as thalamus and fetal brain.

Its subcellular location is the secreted. In terms of biological role, serine protease that has amidolytic activity, cleaving its substrates before Arg residues. This is Serine protease 33 (PRSS33) from Homo sapiens (Human).